Consider the following 512-residue polypeptide: Probable cytochrome P450 6d2 (512 aa).

Cys-457 provides a ligand contact to heme.

This sequence belongs to the cytochrome P450 family. Requires heme as cofactor.

The protein localises to the endoplasmic reticulum membrane. Its subcellular location is the microsome membrane. May be involved in the metabolism of insect hormones and in the breakdown of synthetic insecticides. This chain is Probable cytochrome P450 6d2 (Cyp6d2), found in Drosophila melanogaster (Fruit fly).